The sequence spans 559 residues: Dihydroxy-acid dehydratase (559 aa).

Cys-49 serves as a coordination point for [2Fe-2S] cluster. Asp-81 is a Mg(2+) binding site. Cys-122 provides a ligand contact to [2Fe-2S] cluster. Residues Asp-123 and Lys-124 each contribute to the Mg(2+) site. An N6-carboxylysine modification is found at Lys-124. Cys-194 is a binding site for [2Fe-2S] cluster. Glu-446 contacts Mg(2+). Catalysis depends on Ser-472, which acts as the Proton acceptor.

It belongs to the IlvD/Edd family. Homodimer. It depends on [2Fe-2S] cluster as a cofactor. Mg(2+) is required as a cofactor.

It carries out the reaction (2R)-2,3-dihydroxy-3-methylbutanoate = 3-methyl-2-oxobutanoate + H2O. The enzyme catalyses (2R,3R)-2,3-dihydroxy-3-methylpentanoate = (S)-3-methyl-2-oxopentanoate + H2O. The protein operates within amino-acid biosynthesis; L-isoleucine biosynthesis; L-isoleucine from 2-oxobutanoate: step 3/4. Its pathway is amino-acid biosynthesis; L-valine biosynthesis; L-valine from pyruvate: step 3/4. In terms of biological role, functions in the biosynthesis of branched-chain amino acids. Catalyzes the dehydration of (2R,3R)-2,3-dihydroxy-3-methylpentanoate (2,3-dihydroxy-3-methylvalerate) into 2-oxo-3-methylpentanoate (2-oxo-3-methylvalerate) and of (2R)-2,3-dihydroxy-3-methylbutanoate (2,3-dihydroxyisovalerate) into 2-oxo-3-methylbutanoate (2-oxoisovalerate), the penultimate precursor to L-isoleucine and L-valine, respectively. This is Dihydroxy-acid dehydratase from Prochlorococcus marinus subsp. pastoris (strain CCMP1986 / NIES-2087 / MED4).